A 391-amino-acid polypeptide reads, in one-letter code: Solute carrier family 35 member F2 (391 aa).

10 consecutive transmembrane segments (helical) span residues methionine 39–threonine 59, leucine 73–valine 93, tryptophan 108–alanine 128, isoleucine 137–leucine 157, phenylalanine 165–methionine 185, leucine 200–glutamine 220, valine 230–isoleucine 250, leucine 267–isoleucine 287, alanine 294–phenylalanine 314, and phenylalanine 318–serine 338. Residues valine 361–alanine 391 are disordered. The segment covering serine 365–glutamine 380 has biased composition (polar residues).

The protein belongs to the SLC35F solute transporter family.

It is found in the membrane. Its function is as follows. Putative solute transporter. The polypeptide is Solute carrier family 35 member F2 (slc35f2) (Xenopus tropicalis (Western clawed frog)).